The chain runs to 134 residues: T-cell receptor beta chain V region CTL-F3 (134 aa).

Residues M1–T19 form the signal peptide. Positions N20–L115 are v segment. C42 and C111 are oxidised to a cystine. N-linked (GlcNAc...) asparagine glycosylation occurs at N90. The tract at residues S116–V119 is d segment. Residues S120–L134 form a j segment region.

The sequence is that of T-cell receptor beta chain V region CTL-F3 from Mus musculus (Mouse).